The sequence spans 520 residues: GMP synthase [glutamine-hydrolyzing] (520 aa).

A Glutamine amidotransferase type-1 domain is found at 9–202 (SVLIVDFGSQ…IHNIAGIKGD (194 aa)). The active-site Nucleophile is the cysteine 86. Active-site residues include histidine 176 and glutamate 178. Residues 203 to 395 (WSMSAYRQKA…LGLPDSFIGR (193 aa)) form the GMPS ATP-PPase domain. ATP is bound at residue 230–236 (SGGVDSS).

Homodimer.

The enzyme catalyses XMP + L-glutamine + ATP + H2O = GMP + L-glutamate + AMP + diphosphate + 2 H(+). Its pathway is purine metabolism; GMP biosynthesis; GMP from XMP (L-Gln route): step 1/1. In terms of biological role, catalyzes the synthesis of GMP from XMP. In Rhizobium johnstonii (strain DSM 114642 / LMG 32736 / 3841) (Rhizobium leguminosarum bv. viciae), this protein is GMP synthase [glutamine-hydrolyzing].